A 1502-amino-acid polypeptide reads, in one-letter code: Gem-associated protein 5 (1502 aa).

An important for interaction with U1 snRNA region spans residues 1-124 (MKPEPRTLPP…LHWSPTVKDL (124 aa)). The segment at 13-15 (NWY) is interaction with U4 snRNA. S48 carries the phosphoserine modification. WD repeat units follow at residues 62–104 (GHTE…VVTE), 107–148 (LHQH…QHLF), 150–189 (EPRT…EVIH), 193–264 (GHDD…GVMV), 280–321 (TVKE…RRKY), 333–374 (HSRI…CCWT), 377–417 (SLGG…NNYD), 424–464 (GVKS…PPQI), 468–509 (YHKK…VVLQ), 533–573 (RYKL…LLCT), and 576–622 (QHHK…ESNP). S624 carries the phosphoserine modification. WD repeat units lie at residues 637–677 (GHTA…PLFN) and 680–720 (GHRG…HSRP). Disordered regions lie at residues 740–797 (KLKK…SPVV) and 819–838 (SSKA…EALL). A Glycyl lysine isopeptide (Lys-Gly) (interchain with G-Cter in SUMO2) cross-link involves residue K754. S757, S770, and S778 each carry phosphoserine. The span at 825–838 (LKKEPAKEKPEALL) shows a compositional bias: basic and acidic residues. S845 carries the post-translational modification Phosphoserine. Disordered regions lie at residues 1309–1338 (VSDK…LSAE) and 1378–1427 (HQKS…SLPE). Positions 1355 to 1382 (ASLQTSQRTVAEVQETLAEMIRQHQKSQ) form a coiled coil. The segment covering 1380–1391 (KSQLCKATTNGP) has biased composition (polar residues). Basic and acidic residues predominate over residues 1392 to 1407 (SRDEPSRDEPSQEAER).

The protein belongs to the WD repeat gemin-5 family. In terms of assembly, part of the core SMN complex that contains SMN1, GEMIN2/SIP1, DDX20/GEMIN3, GEMIN4, GEMIN5, GEMIN6, GEMIN7, GEMIN8 and STRAP/UNRIP. Part of the SMN-Sm complex that contains SMN1, GEMIN2/SIP1, DDX20/GEMIN3, GEMIN4, GEMIN5, GEMIN6, GEMIN7, GEMIN8, STRAP/UNRIP and the Sm proteins SNRPB, SNRPD1, SNRPD2, SNRPD3, SNRPE, SNRPF and SNRPG. Interacts directly with SMN1, SNRPB, SNRPD1, SNRPD2, SNRPD3 and SNRPE. Identified in a SMN complex that contains GEMIN2/SIP1. Interacts with cytosolic DDX20/GEMIN3 and GEMIN4. Interacts with SNRNP70 and HNRNPU. Identified in a complex with 80S ribosomes; binds to the 60S large ribosomal subunit. Interacts with the ribosomal subunits RPL3 and RPL4.

Its subcellular location is the nucleus. It localises to the nucleoplasm. The protein resides in the gem. It is found in the cytoplasm. Its function is as follows. The SMN complex catalyzes the assembly of small nuclear ribonucleoproteins (snRNPs), the building blocks of the spliceosome, and thereby plays an important role in the splicing of cellular pre-mRNAs. Most spliceosomal snRNPs contain a common set of Sm proteins SNRPB, SNRPD1, SNRPD2, SNRPD3, SNRPE, SNRPF and SNRPG that assemble in a heptameric protein ring on the Sm site of the small nuclear RNA to form the core snRNP (Sm core). In the cytosol, the Sm proteins SNRPD1, SNRPD2, SNRPE, SNRPF and SNRPG are trapped in an inactive 6S pICln-Sm complex by the chaperone CLNS1A that controls the assembly of the core snRNP. To assemble core snRNPs, the SMN complex accepts the trapped 5Sm proteins from CLNS1A forming an intermediate. Binding of snRNA inside 5Sm ultimately triggers eviction of the SMN complex, thereby allowing binding of SNRPD3 and SNRPB to complete assembly of the core snRNP. Within the SMN complex, GEMIN5 recognizes and delivers the small nuclear RNAs (snRNAs) to the SMN complex. Binds to the 7-methylguanosine cap of RNA molecules. Binds to the 3'-UTR of SMN1 mRNA and regulates its translation; does not affect mRNA stability. May play a role in the regulation of protein synthesis via its interaction with ribosomes. This chain is Gem-associated protein 5 (Gemin5), found in Mus musculus (Mouse).